The following is a 455-amino-acid chain: Serine--tRNA ligase (455 aa).

An L-serine-binding site is contributed by 252 to 254 (TAE). ATP is bound by residues 283-285 (RKE) and Val299. Position 306 (Glu306) interacts with L-serine. 370-373 (EVVS) provides a ligand contact to ATP. Residue Thr406 participates in L-serine binding.

It belongs to the class-II aminoacyl-tRNA synthetase family. Type-1 seryl-tRNA synthetase subfamily. In terms of assembly, homodimer. The tRNA molecule binds across the dimer.

The protein localises to the cytoplasm. The catalysed reaction is tRNA(Ser) + L-serine + ATP = L-seryl-tRNA(Ser) + AMP + diphosphate + H(+). The enzyme catalyses tRNA(Sec) + L-serine + ATP = L-seryl-tRNA(Sec) + AMP + diphosphate + H(+). It participates in aminoacyl-tRNA biosynthesis; selenocysteinyl-tRNA(Sec) biosynthesis; L-seryl-tRNA(Sec) from L-serine and tRNA(Sec): step 1/1. Its function is as follows. Catalyzes the attachment of serine to tRNA(Ser). Is also able to aminoacylate tRNA(Sec) with serine, to form the misacylated tRNA L-seryl-tRNA(Sec), which will be further converted into selenocysteinyl-tRNA(Sec). This is Serine--tRNA ligase from Thermococcus gammatolerans (strain DSM 15229 / JCM 11827 / EJ3).